The sequence spans 101 residues: Apolipoprotein C-II (101 aa).

Positions 1 to 22 are cleaved as a signal peptide; that stretch reads MGTRFLLALFLVLLVLGLEVQA. A lipid binding region spans residues 66 to 74; the sequence is AVDERIRDM. A lipoprotein lipase cofactor region spans residues 78 to 101; that stretch reads STAAVTTYAGIFTDQLFSMLKGEQ.

This sequence belongs to the apolipoprotein C2 family. Post-translationally, proapolipoprotein C-II is synthesized as a sialic acid containing glycoprotein which is subsequently desialylated prior to its proteolytic processing. In terms of processing, proapolipoprotein C-II, the major form found in plasma undergoes proteolytic cleavage of its N-terminal hexapeptide to generate apolipoprotein C-II, which occurs as the minor form in plasma.

Its subcellular location is the secreted. Component of chylomicrons, very low-density lipoproteins (VLDL), low-density lipoproteins (LDL), and high-density lipoproteins (HDL) in plasma. Plays an important role in lipoprotein metabolism as an activator of lipoprotein lipase. Both proapolipoprotein C-II and apolipoprotein C-II can activate lipoprotein lipase. The chain is Apolipoprotein C-II (APOC2) from Tupaia glis (Common tree shrew).